Here is a 407-residue protein sequence, read N- to C-terminus: Tryptophan synthase beta chain (407 aa).

A compositionally biased stretch (polar residues) spans 1 to 11; the sequence is MSTAPSQQHAS. The disordered stretch occupies residues 1–25; the sequence is MSTAPSQQHASAQVPDPRGRFGDFG. N6-(pyridoxal phosphate)lysine is present on lysine 100.

The protein belongs to the TrpB family. As to quaternary structure, tetramer of two alpha and two beta chains. The cofactor is pyridoxal 5'-phosphate.

The catalysed reaction is (1S,2R)-1-C-(indol-3-yl)glycerol 3-phosphate + L-serine = D-glyceraldehyde 3-phosphate + L-tryptophan + H2O. It functions in the pathway amino-acid biosynthesis; L-tryptophan biosynthesis; L-tryptophan from chorismate: step 5/5. The beta subunit is responsible for the synthesis of L-tryptophan from indole and L-serine. The chain is Tryptophan synthase beta chain from Rhodopirellula baltica (strain DSM 10527 / NCIMB 13988 / SH1).